The following is a 601-amino-acid chain: uncharacterized protein (601 aa).

Positions 127–364 (SSLFSSGSPP…PAFANDDTVH (238 aa)) are disordered. The span at 128 to 137 (SLFSSGSPPD) shows a compositional bias: polar residues. The segment covering 141 to 154 (RNSTSNLSSVSTNS) has biased composition (low complexity). Polar residues-rich tracts occupy residues 159-177 (TIGS…ASQR), 199-213 (ALSS…NVTP), and 232-250 (SATN…SPSQ). Ser247 and Ser281 each carry phosphoserine. Positions 265–281 (SLSSSPSSEDSDLSLSS) are enriched in low complexity. Basic and acidic residues-rich tracts occupy residues 286–296 (DEKKQPSKSEK) and 313–325 (GSKE…KEKA). Phosphoserine is present on Ser335. Over residues 338-356 (DTSTEYDSNSLRRSRSNPA) the composition is skewed to polar residues.

This is an uncharacterized protein from Schizosaccharomyces pombe (strain 972 / ATCC 24843) (Fission yeast).